The primary structure comprises 356 residues: Histidinol-phosphate aminotransferase (356 aa).

An N6-(pyridoxal phosphate)lysine modification is found at Lys-214.

It belongs to the class-II pyridoxal-phosphate-dependent aminotransferase family. Histidinol-phosphate aminotransferase subfamily. Homodimer. It depends on pyridoxal 5'-phosphate as a cofactor.

It catalyses the reaction L-histidinol phosphate + 2-oxoglutarate = 3-(imidazol-4-yl)-2-oxopropyl phosphate + L-glutamate. Its pathway is amino-acid biosynthesis; L-histidine biosynthesis; L-histidine from 5-phospho-alpha-D-ribose 1-diphosphate: step 7/9. This is Histidinol-phosphate aminotransferase from Escherichia fergusonii (strain ATCC 35469 / DSM 13698 / CCUG 18766 / IAM 14443 / JCM 21226 / LMG 7866 / NBRC 102419 / NCTC 12128 / CDC 0568-73).